Consider the following 425-residue polypeptide: Type I restriction enzyme MjaVII specificity subunit (425 aa).

The segment at 9 to 168 (KKTEIGEIPE…KSFKIPLPPL (160 aa)) is target recognition domain 1. A central conserved region (CCR) region spans residues 169–208 (EEQKQIAKILTKIDEGIEIIEKSINKLERIKKGLMHKLLT). Residues 169 to 208 (EEQKQIAKILTKIDEGIEIIEKSINKLERIKKGLMHKLLT) adopt a coiled-coil conformation. Positions 209 to 368 (KGIGHSRFKK…TFKELSKSML (160 aa)) are target recognition domain 2. Positions 369-418 (ENFKIPLPPLEEQKQIAKILSSVDKSIELKKQKKEKLQRMKKKIMELLLT) form a coiled coil. The tract at residues 369 to 418 (ENFKIPLPPLEEQKQIAKILSSVDKSIELKKQKKEKLQRMKKKIMELLLT) is distal conserved region (DCR).

This sequence belongs to the type-I restriction system S methylase family. In terms of assembly, the type I restriction/modification system is composed of three polypeptides R, M and S.

The specificity (S) subunit of a type I restriction enzyme; this subunit dictates DNA sequence specificity. The M and S subunits together form a methyltransferase (MTase) that methylates A-3 on the top and bottom strands of the sequence 5'-CAAN(7)TGG-3'. In the presence of the R subunit the complex can also act as an endonuclease, binding to the same target sequence but cutting the DNA some distance from this site. Whether the DNA is cut or modified depends on the methylation state of the target sequence. When the target site is unmodified, the DNA is cut. When the target site is hemimethylated, the complex acts as a maintenance MTase modifying the DNA so that both strands become methylated. After locating a non-methylated recognition site, the enzyme complex serves as a molecular motor that translocates DNA in an ATP-dependent manner until a collision occurs that triggers cleavage. The polypeptide is Type I restriction enzyme MjaVII specificity subunit (Methanocaldococcus jannaschii (strain ATCC 43067 / DSM 2661 / JAL-1 / JCM 10045 / NBRC 100440) (Methanococcus jannaschii)).